Reading from the N-terminus, the 271-residue chain is Pyrroline-5-carboxylate reductase (271 aa).

This sequence belongs to the pyrroline-5-carboxylate reductase family.

It localises to the cytoplasm. The catalysed reaction is L-proline + NADP(+) = (S)-1-pyrroline-5-carboxylate + NADPH + 2 H(+). It catalyses the reaction L-proline + NAD(+) = (S)-1-pyrroline-5-carboxylate + NADH + 2 H(+). The protein operates within amino-acid biosynthesis; L-proline biosynthesis; L-proline from L-glutamate 5-semialdehyde: step 1/1. In terms of biological role, catalyzes the reduction of 1-pyrroline-5-carboxylate (PCA) to L-proline. The sequence is that of Pyrroline-5-carboxylate reductase from Staphylococcus haemolyticus (strain JCSC1435).